Here is a 470-residue protein sequence, read N- to C-terminus: Calcium/manganese antiporter SLC30A10 (470 aa).

Over 1 to 10 the chain is Cytoplasmic; sequence MGRYSGKTCR. Residues 11-31 traverse the membrane as a helical segment; the sequence is LLFMLVLTAAFFVAELVSGYL. Residues 32–34 are Extracellular-facing; that stretch reads GNS. The chain crosses the membrane as a helical span at residues 35–55; sequence IALLSDSFNMLSDLISLCVGL. Residues 56–81 lie on the Cytoplasmic side of the membrane; sequence GSGYIARRGPRGSSATYGYVRAEVVG. Residues 82-102 traverse the membrane as a helical segment; sequence ALSNAVFLTALCFTIFVEAVL. Topologically, residues 103–113 are extracellular; sequence RLARPERIDDP. Residues 114 to 134 traverse the membrane as a helical segment; it reads ELVLIVGALGLAVNVVGLLIF. Residues 135–233 are Cytoplasmic-facing; sequence QDCGACFSRC…KSEALNIRGV (99 aa). Positions 146-223 are disordered; it reads RGRRTRPSQQ…EPEETTKKEK (78 aa). Residues 171-184 are compositionally biased toward low complexity; that stretch reads AATATAPGSGTAVT. Residues 234-254 traverse the membrane as a helical segment; it reads LLHVMGDALGSVVVVITAIIF. Residues 255-270 lie on the Extracellular side of the membrane; the sequence is YVQPLRREDPCNWQCY. A helical transmembrane segment spans residues 271–291; it reads IDPSLTVVMVIIILSSAFPLI. Residues 292–470 are Cytoplasmic-facing; the sequence is KETAVILLQM…RQHYENSTHF (179 aa). Positions 300–470 are required for plasma membrane localization; sequence QMVPKGVNME…RQHYENSTHF (171 aa). A disordered region spans residues 451 to 470; sequence QGQTLSKTQERQHYENSTHF. Residues 458-470 are compositionally biased toward basic and acidic residues; it reads TQERQHYENSTHF.

This sequence belongs to the cation diffusion facilitator (CDF) transporter (TC 2.A.4) family. SLC30A subfamily. Forms homodimers. Forms heterodimers and high-molecular weight oligomers with SLC30A3, SLC30A2 and SLC30A4; heterodimerization is mediated by covalent-bound tyrosine residues, occurs probably in a tissue-specific manner and could mediate the intracellular zinc transport activity into early endosomes and recycling endosomes. As to expression, specifically expressed in fetal liver and fetal brain.

It is found in the cell membrane. The protein resides in the golgi apparatus membrane. The protein localises to the recycling endosome membrane. Its subcellular location is the early endosome membrane. The enzyme catalyses Mn(2+)(out) + Ca(2+)(in) = Mn(2+)(in) + Ca(2+)(out). It carries out the reaction Zn(2+)(in) = Zn(2+)(out). Its function is as follows. Calcium:manganese antiporter of the plasma membrane mediating the efflux of intracellular manganese coupled to an active extracellular calcium exchange. Required for intracellular manganese homeostasis, an essential cation for the function of several enzymes, including some crucially important for the metabolism of neurotransmitters and other neuronal metabolic pathways. Manganese can also be cytotoxic and induce oxidative stress, mitochondrial dysfunction and apoptosis. Could also have an intracellular zinc ion transporter activity, directly regulating intracellular zinc ion homeostasis and more indirectly various signaling pathway and biological processes. This Mus musculus (Mouse) protein is Calcium/manganese antiporter SLC30A10.